A 666-amino-acid chain; its full sequence is tRNA 5-methylaminomethyl-2-thiouridine biosynthesis bifunctional protein MnmC (666 aa).

The segment at 1–245 is tRNA (mnm(5)s(2)U34)-methyltransferase; that stretch reads MKQYAIQPAN…KREMLCGVMA (245 aa). The FAD-dependent cmnm(5)s(2)U34 oxidoreductase stretch occupies residues 270–666; sequence IGGGIASALL…RKLLKGKAVK (397 aa).

In the N-terminal section; belongs to the methyltransferase superfamily. tRNA (mnm(5)s(2)U34)-methyltransferase family. This sequence in the C-terminal section; belongs to the DAO family. The cofactor is FAD.

It is found in the cytoplasm. It catalyses the reaction 5-aminomethyl-2-thiouridine(34) in tRNA + S-adenosyl-L-methionine = 5-methylaminomethyl-2-thiouridine(34) in tRNA + S-adenosyl-L-homocysteine + H(+). Catalyzes the last two steps in the biosynthesis of 5-methylaminomethyl-2-thiouridine (mnm(5)s(2)U) at the wobble position (U34) in tRNA. Catalyzes the FAD-dependent demodification of cmnm(5)s(2)U34 to nm(5)s(2)U34, followed by the transfer of a methyl group from S-adenosyl-L-methionine to nm(5)s(2)U34, to form mnm(5)s(2)U34. This Citrobacter koseri (strain ATCC BAA-895 / CDC 4225-83 / SGSC4696) protein is tRNA 5-methylaminomethyl-2-thiouridine biosynthesis bifunctional protein MnmC.